The sequence spans 608 residues: RAS guanyl-releasing protein 2 (608 aa).

One can recognise an N-terminal Ras-GEF domain in the interval 4-126 (TLDLDKGCTV…SLIDIESVPT (123 aa)). 3 positions are modified to phosphoserine: serine 116, serine 117, and serine 147. One can recognise a Ras-GEF domain in the interval 154–387 (EPMELAEHLT…YQLSLQREPR (234 aa)). Positions 382–405 (LQREPRSKSSPTSPTSCTPPPRPP) are disordered. EF-hand domains lie at 426-461 (HIEK…FPYL) and 463-490 (AFGD…SSSV). Ca(2+) contacts are provided by aspartate 439, aspartate 441, aspartate 443, histidine 445, glutamate 450, aspartate 468, asparagine 470, aspartate 472, cysteine 474, and glutamate 479. A Phorbol-ester/DAG-type zinc finger spans residues 498–548 (VHNFQESNSLRPVACRHCKALILGIYKQGLKCRACGVNCHKQCKERLSVEC). Phosphoserine is present on residues serine 554 and serine 575. The tract at residues 555 to 596 (VSLEGSAPSPSPTHTHHRAFSFSLPRPGRRSSRPPEIREEEV) is disordered.

Belongs to the RASGRP family. As to quaternary structure, forms a signaling complex with RAP1 and BRAF. Interacts with F-actin. Interacts with RAP1. As to expression, detected in megakaryocytes, platelet and neutrophils but not in lymphocytes (at protein level). Isoform 1 and isoform 3 are detected in brain basal glanglia, heart, lung, spleen, liver and kidney interstitial cells.

The protein resides in the cytoplasm. It localises to the cytosol. Its subcellular location is the cell membrane. The protein localises to the synapse. It is found in the synaptosome. The protein resides in the cell projection. It localises to the ruffle membrane. Functionally, functions as a calcium- and DAG-regulated nucleotide exchange factor specifically activating Rap through the exchange of bound GDP for GTP. May also activate other GTPases such as RRAS, RRAS2, NRAS, KRAS but not HRAS. Functions in aggregation of platelets and adhesion of T-lymphocytes and neutrophils probably through inside-out integrin activation. May function in the muscarinic acetylcholine receptor M1/CHRM1 signaling pathway. In Mus musculus (Mouse), this protein is RAS guanyl-releasing protein 2 (Rasgrp2).